Consider the following 249-residue polypeptide: MAQFYPGSTKIAENRRKFMNPDAELEKLREISDEDVVRILGHRAPGEEYPSVHPPLEELDEPEDPIKDIVEPTEGAKAGDRVRYVQFTDSVYFAPAQPYIRSRAYLWRYRGADAGTLSGRQIIEARERDVEKIAKELIETEFFDPARTGIRGKSVHGHSLRLDENGMMFDMLRRQVYDEETGRVKMVKNQIGDEFDEPIDLGEPLDEETLKEKTTIYRIDNIPYREDKDLLEIVQRIHQLRSEAGFSPE.

A disordered region spans residues 43–62; the sequence is RAPGEEYPSVHPPLEELDEP. Arg120 serves as a coordination point for coenzyme M.

It belongs to the methyl-coenzyme M reductase gamma subunit family. MCR is a hexamer of two alpha, two beta, and two gamma chains, forming a dimer of heterotrimers. Requires coenzyme F430 as cofactor.

Its subcellular location is the cytoplasm. It catalyses the reaction coenzyme B + methyl-coenzyme M = methane + coenzyme M-coenzyme B heterodisulfide. The protein operates within one-carbon metabolism; methyl-coenzyme M reduction; methane from methyl-coenzyme M: step 1/1. Functionally, component of the methyl-coenzyme M reductase (MCR) I that catalyzes the reductive cleavage of methyl-coenzyme M (CoM-S-CH3 or 2-(methylthio)ethanesulfonate) using coenzyme B (CoB or 7-mercaptoheptanoylthreonine phosphate) as reductant which results in the production of methane and the mixed heterodisulfide of CoB and CoM (CoM-S-S-CoB). This is the final step in methanogenesis. This is Methyl-coenzyme M reductase subunit gamma (mcrG) from Methanothermus fervidus.